We begin with the raw amino-acid sequence, 210 residues long: Riboflavin kinase (210 aa).

The H-T-H motif-like stretch occupies residues 1 to 81; the sequence is MECRERRLAA…DLLRYFNIAS (81 aa). A riboflavin kinase region spans residues 82-210; the sequence is IRLVGRVVSG…GDVVEVEVLL (129 aa). A CDP-binding site is contributed by 91-96; it reads GLGEGA. Residues threonine 120 and asparagine 122 each coordinate Mg(2+). FMN contacts are provided by threonine 177 and glutamate 185. 190–193 contacts CDP; that stretch reads VKLR.

The protein belongs to the archaeal riboflavin kinase family. It depends on Mg(2+) as a cofactor.

The catalysed reaction is riboflavin + CTP = CDP + FMN + H(+). The protein operates within cofactor biosynthesis; FMN biosynthesis; FMN from riboflavin (CTP route): step 1/1. Functionally, catalyzes the CTP-dependent phosphorylation of riboflavin (vitamin B2) to form flavin mononucleotide (FMN). The chain is Riboflavin kinase (ribK) from Pyrobaculum arsenaticum (strain DSM 13514 / JCM 11321 / PZ6).